A 342-amino-acid chain; its full sequence is ATP-dependent (S)-NAD(P)H-hydrate dehydratase (342 aa).

The region spanning 11–337 (ILPALEKVVP…EYLGHRLFTF (327 aa)) is the YjeF C-terminal domain. (6S)-NADPHX is bound by residues Gly127 and 180 to 186 (NVMEHKR). ATP is bound by residues 229-233 (KGKTD) and 248-257 (GSPRRCGGQG). Asp258 contributes to the (6S)-NADPHX binding site.

This sequence belongs to the NnrD/CARKD family. Mg(2+) is required as a cofactor.

It carries out the reaction (6S)-NADHX + ATP = ADP + phosphate + NADH + H(+). It catalyses the reaction (6S)-NADPHX + ATP = ADP + phosphate + NADPH + H(+). In terms of biological role, catalyzes the dehydration of the S-form of NAD(P)HX at the expense of ATP, which is converted to ADP. Together with NAD(P)HX epimerase, which catalyzes the epimerization of the S- and R-forms, the enzyme allows the repair of both epimers of NAD(P)HX, a damaged form of NAD(P)H that is a result of enzymatic or heat-dependent hydration. The sequence is that of ATP-dependent (S)-NAD(P)H-hydrate dehydratase from Physcomitrium patens (Spreading-leaved earth moss).